A 624-amino-acid chain; its full sequence is Chaperone protein HtpG (624 aa).

The interval 1–336 is a; substrate-binding; sequence MKGQETRGFQ…SNDLPLNVSR (336 aa). A b region spans residues 337–552; sequence EILQDSTVTR…ADEMSTQMAK (216 aa). Positions 553 to 624 are c; the sequence is LFAAAGQAVP…IRRMNQLLVS (72 aa).

This sequence belongs to the heat shock protein 90 family. As to quaternary structure, homodimer.

The protein resides in the cytoplasm. Its function is as follows. Molecular chaperone. Has ATPase activity. This Citrobacter koseri (strain ATCC BAA-895 / CDC 4225-83 / SGSC4696) protein is Chaperone protein HtpG.